Here is a 439-residue protein sequence, read N- to C-terminus: GTPase Obg (439 aa).

The region spanning 4-162 is the Obg domain; that stretch reads IEFIDVVDIY…KHIQLELKLL (159 aa). The 174-residue stretch at 163-336 folds into the OBG-type G domain; the sequence is ADVGLIGYPN…LKYAMWDIIK (174 aa). GTP-binding positions include 169–176, 194–198, 218–221, 288–291, and 317–319; these read GYPNVGKS, FTTLV, DIPG, NKSD, and SAV. Residues S176 and T196 each coordinate Mg(2+). Residues 361–439 form the OCT domain; that stretch reads LVLPDRVDIK…VEGVDFIFKE (79 aa).

This sequence belongs to the TRAFAC class OBG-HflX-like GTPase superfamily. OBG GTPase family. In terms of assembly, monomer. Mg(2+) serves as cofactor.

It is found in the cytoplasm. An essential GTPase which binds GTP, GDP and possibly (p)ppGpp with moderate affinity, with high nucleotide exchange rates and a fairly low GTP hydrolysis rate. Plays a role in control of the cell cycle, stress response, ribosome biogenesis and in those bacteria that undergo differentiation, in morphogenesis control. This chain is GTPase Obg, found in Fervidobacterium nodosum (strain ATCC 35602 / DSM 5306 / Rt17-B1).